The sequence spans 311 residues: Cell division protein ZipA (311 aa).

Residues 1–5 (MQELR) are Periplasmic-facing. A helical transmembrane segment spans residues 6 to 26 (FVLIVVGALAIMALLFHGLWT). Topologically, residues 27-311 (SKKEGKAKFG…QIVEFKAANA (285 aa)) are cytoplasmic. Residues 32-54 (KAKFGDKPLSKLDLGESEPKESE) are compositionally biased toward basic and acidic residues. Residues 32–60 (KAKFGDKPLSKLDLGESEPKESEMYVAPE) form a disordered region.

It belongs to the ZipA family. As to quaternary structure, interacts with FtsZ via their C-terminal domains.

It localises to the cell inner membrane. In terms of biological role, essential cell division protein that stabilizes the FtsZ protofilaments by cross-linking them and that serves as a cytoplasmic membrane anchor for the Z ring. Also required for the recruitment to the septal ring of downstream cell division proteins. This is Cell division protein ZipA from Vibrio vulnificus (strain YJ016).